The sequence spans 201 residues: MAGPQRRGSGAGGGERRDRKGRDGGAAAAEKTAYVERVVAINRVAKVVKGGRRFSFTALVVVGDGDGTVGVGYGKAKEVPAAIAKGVEEAKKHFFKVPRIQGTIPHPITGEKAAGVVLLKPASPGTGVIAGGPVRAVLECAGVHDILSKSLGSSNAINIVHATVAALKGLQRPEEIAARRGLPLEDVAPAALLRARAGAGA.

Residues 1 to 27 (MAGPQRRGSGAGGGERRDRKGRDGGAA) are disordered. The segment covering 14–23 (GERRDRKGRD) has biased composition (basic and acidic residues). The S5 DRBM domain occupies 34–97 (YVERVVAINR…EEAKKHFFKV (64 aa)).

This sequence belongs to the universal ribosomal protein uS5 family. As to quaternary structure, part of the 30S ribosomal subunit. Contacts proteins S4 and S8.

With S4 and S12 plays an important role in translational accuracy. Functionally, located at the back of the 30S subunit body where it stabilizes the conformation of the head with respect to the body. This Streptomyces avermitilis (strain ATCC 31267 / DSM 46492 / JCM 5070 / NBRC 14893 / NCIMB 12804 / NRRL 8165 / MA-4680) protein is Small ribosomal subunit protein uS5.